The chain runs to 635 residues: 1-deoxy-D-xylulose-5-phosphate synthase (635 aa).

Residues His72 and 113–115 contribute to the thiamine diphosphate site; that span reads GHA. Mg(2+) is bound at residue Asp144. Thiamine diphosphate is bound by residues 145–146, Asn174, Tyr286, and Glu369; that span reads GA. Residue Asn174 coordinates Mg(2+).

It belongs to the transketolase family. DXPS subfamily. As to quaternary structure, homodimer. The cofactor is Mg(2+). Thiamine diphosphate serves as cofactor.

The enzyme catalyses D-glyceraldehyde 3-phosphate + pyruvate + H(+) = 1-deoxy-D-xylulose 5-phosphate + CO2. Its pathway is metabolic intermediate biosynthesis; 1-deoxy-D-xylulose 5-phosphate biosynthesis; 1-deoxy-D-xylulose 5-phosphate from D-glyceraldehyde 3-phosphate and pyruvate: step 1/1. In terms of biological role, catalyzes the acyloin condensation reaction between C atoms 2 and 3 of pyruvate and glyceraldehyde 3-phosphate to yield 1-deoxy-D-xylulose-5-phosphate (DXP). The protein is 1-deoxy-D-xylulose-5-phosphate synthase of Gloeothece citriformis (strain PCC 7424) (Cyanothece sp. (strain PCC 7424)).